Reading from the N-terminus, the 353-residue chain is 2-Hydroxyacid oxidase 2 (353 aa).

The region spanning 2-353 (PLVCLADFKA…SPDLIQFSRL (352 aa)) is the FMN hydroxy acid dehydrogenase domain. FMN is bound by residues 77-79 (PTA), S106, and Q128. Y130 is a binding site for a 2-oxocarboxylate. The residue at position 133 (S133) is a Phosphoserine. Residue T156 coordinates FMN. Residue R165 participates in a 2-oxocarboxylate binding. K224 is an FMN binding site. H248 (proton acceptor) is an active-site residue. A 2-oxocarboxylate is bound at residue R251. Residues 279 to 283 (DGGVR) and 302 to 303 (GR) contribute to the FMN site. Positions 351 to 353 (SRL) match the Microbody targeting signal motif.

Belongs to the FMN-dependent alpha-hydroxy acid dehydrogenase family. As to quaternary structure, homotetramer. Could also form homooctamer. It depends on FMN as a cofactor. As to expression, expressed in kidney.

Its subcellular location is the peroxisome. The catalysed reaction is a (2S)-2-hydroxycarboxylate + O2 = a 2-oxocarboxylate + H2O2. The enzyme catalyses 2-hydroxyoctanoate + O2 = 2-oxooctanoate + H2O2. It catalyses the reaction 2-hydroxyhexadecanoate + O2 = 2-oxohexadecanoate + H2O2. It carries out the reaction 2-hydroxyhexanoate + O2 = 2-oxohexanoate + H2O2. The catalysed reaction is mandelate + O2 = phenylglyoxylate + H2O2. Is inhibited in vitro by CCPST (4-carboxy-5-(4-chlorophenyl)sulfanyl-1,2,3-thiadiazole). Oxidase that catalyzes the oxidation of medium and long chain hydroxyacids such as 2-hydroxyhexadecanoate, 2-hydroxyoctanoate, 2-hydroxyhexanoate and 2-hydroxybutanoate, to the correspondong 2-oxoacids. Its role in the oxidation of 2-hydroxy fatty acids may contribute to the general pathway of fatty acid alpha-oxidation. Can also use mandelate as substrate. Active in vitro with the artificial electron acceptor 2,6-dichlorophenolindophenol (DCIP), but O2 is believed to be the physiological electron acceptor, leading to the production of H2O2. The sequence is that of 2-Hydroxyacid oxidase 2 (Hao2) from Rattus norvegicus (Rat).